The primary structure comprises 353 residues: UPF0283 membrane protein YPA_1696 (353 aa).

Transmembrane regions (helical) follow at residues 71 to 91, 101 to 121, and 214 to 234; these read MVTA…VQWV, IALG…GSVV, and ESAL…FIAW.

The protein belongs to the UPF0283 family.

The protein localises to the cell inner membrane. This Yersinia pestis bv. Antiqua (strain Antiqua) protein is UPF0283 membrane protein YPA_1696.